The following is a 542-amino-acid chain: Chaperonin GroEL (542 aa).

ATP-binding positions include 29-32 (TLGP), Lys-50, 86-90 (DGTTT), Gly-413, 477-479 (NAA), and Asp-493.

It belongs to the chaperonin (HSP60) family. Forms a cylinder of 14 subunits composed of two heptameric rings stacked back-to-back. Interacts with the co-chaperonin GroES.

The protein resides in the cytoplasm. It catalyses the reaction ATP + H2O + a folded polypeptide = ADP + phosphate + an unfolded polypeptide.. Functionally, together with its co-chaperonin GroES, plays an essential role in assisting protein folding. The GroEL-GroES system forms a nano-cage that allows encapsulation of the non-native substrate proteins and provides a physical environment optimized to promote and accelerate protein folding. This is Chaperonin GroEL from Solibacter usitatus (strain Ellin6076).